Here is a 234-residue protein sequence, read N- to C-terminus: Zinc transport system ATP-binding protein AdcC (234 aa).

The ABC transporter domain occupies 4–234 (ITVEDLSFYY…HENGQEVGHA (231 aa)). 36-43 (GENGAAKT) is a binding site for ATP.

This sequence belongs to the ABC transporter superfamily.

In terms of biological role, part of the ATP-driven transport system AdcABC for zinc. Required for transformability. The polypeptide is Zinc transport system ATP-binding protein AdcC (adcC) (Streptococcus pneumoniae (strain ATCC BAA-255 / R6)).